We begin with the raw amino-acid sequence, 396 residues long: S-adenosylmethionine synthase (396 aa).

Position 15 (His-15) interacts with ATP. Asp-17 is a binding site for Mg(2+). Glu-43 is a binding site for K(+). Residues Glu-56 and Gln-99 each coordinate L-methionine. The flexible loop stretch occupies residues 99-109; the sequence is QSSDIAMGVDK. ATP is bound by residues 175 to 177, 241 to 242, Asp-250, 256 to 257, Ala-273, and Lys-277; these read DGK, RF, and RK. Asp-250 serves as a coordination point for L-methionine. Residue Lys-281 participates in L-methionine binding.

It belongs to the AdoMet synthase family. As to quaternary structure, homotetramer; dimer of dimers. It depends on Mg(2+) as a cofactor. Requires K(+) as cofactor.

The protein resides in the cytoplasm. It carries out the reaction L-methionine + ATP + H2O = S-adenosyl-L-methionine + phosphate + diphosphate. The protein operates within amino-acid biosynthesis; S-adenosyl-L-methionine biosynthesis; S-adenosyl-L-methionine from L-methionine: step 1/1. In terms of biological role, catalyzes the formation of S-adenosylmethionine (AdoMet) from methionine and ATP. The overall synthetic reaction is composed of two sequential steps, AdoMet formation and the subsequent tripolyphosphate hydrolysis which occurs prior to release of AdoMet from the enzyme. This chain is S-adenosylmethionine synthase, found in Ruminiclostridium cellulolyticum (strain ATCC 35319 / DSM 5812 / JCM 6584 / H10) (Clostridium cellulolyticum).